Consider the following 273-residue polypeptide: Phosphate import ATP-binding protein PstB (273 aa).

The ABC transporter domain maps to 26–268 (MRGEKVCVFY…PTEKRTQDYI (243 aa)). ATP is bound at residue 58-65 (GPSGCGKS).

Belongs to the ABC transporter superfamily. Phosphate importer (TC 3.A.1.7) family. The complex is composed of two ATP-binding proteins (PstB), two transmembrane proteins (PstC and PstA) and a solute-binding protein (PstS).

The protein resides in the cell inner membrane. It catalyses the reaction phosphate(out) + ATP + H2O = ADP + 2 phosphate(in) + H(+). Its function is as follows. Part of the ABC transporter complex PstSACB involved in phosphate import. Responsible for energy coupling to the transport system. This is Phosphate import ATP-binding protein PstB from Brucella abortus (strain 2308).